The following is a 661-amino-acid chain: MMGMALELSVLGRSVIDSKTLNLKRYGQKSKLSGRFLPRAELHCPVALSSSKHSNLSFRFRRSCEFSYRSRFMLFSSSQCHEGSQRKSDSGEKELESIKVLLKRGIVIGALVCGVFLYGCQKVLASAGVVEAGYEVFGQSVVLFKNALPKIYQVLTVLREQGLILAALLSLSAFFSMAETSITTLWPWKVRELAEKEPENGVFRMLRSDVTRFLTTILIGTTVVNIAATALVTEAATAIFGEAGVSAATGLMTVAILLLTEITPKSVAVHNAQEVARIVVRPVAWLSLVLYPVGRIVTYLSMGILKILGLKGRSEPYVTEDELKLMLRGAELSGAIEEEEQDMIENVLEIKDTHVREVMTPLVDVVAIDASASLVDFHSMWVTHQYSRVPVFEQRIDNIVGIAYAMDLLDYVQKGDLLESTSVGDMAHKPAYFVPDSMSVWNLLREFRIRKVHMAVVLNEYGGTIGIVTLEDVVEEIVGEIFDENDSKEEIQKKTGYIVMRDEGIYDVDANTSIDQLSEELNMKMPEGIQYETVSGFVCEAFGYIPKTGESVKVVLEKESWEEDGEEEEGKQERQEPKEKNQIYRVEILAGNARKVSAVRFERVNDMDQVSEASDVKSMVPKFVRKWSSEEDDGNLSNEEDQSENAVLDEHVLADNSKKQQ.

A chloroplast-targeting transit peptide spans 1 to 71 (MMGMALELSV…RSCEFSYRSR (71 aa)). 5 helical membrane-spanning segments follow: residues 105–125 (GIVI…KVLA), 162–182 (GLIL…ETSI), 213–233 (FLTT…ALVT), 239–259 (IFGE…ILLL), and 285–305 (WLSL…MGIL). Residues 154-340 (VLTVLREQGL…ELSGAIEEEE (187 aa)) form the CNNM transmembrane domain. CBS domains are found at residues 359–420 (MTPL…LLES) and 426–484 (MAHK…IFDE). Disordered regions lie at residues 559–578 (ESWE…QEPK) and 628–661 (SSEE…KKQQ). 2 stretches are compositionally biased toward acidic residues: residues 560 to 570 (SWEEDGEEEEG) and 630 to 643 (EEDD…EDQS). The span at 648–661 (LDEHVLADNSKKQQ) shows a compositional bias: basic and acidic residues.

It is found in the plastid. The protein localises to the chloroplast membrane. This chain is Putative DUF21 domain-containing protein At3g13070, chloroplastic (CBSDUFCH1), found in Arabidopsis thaliana (Mouse-ear cress).